Consider the following 160-residue polypeptide: Transcriptional repressor NrdR (160 aa).

Positions 1-11 (MRCPNCNSLDT) are enriched in polar residues. Residues 1 to 20 (MRCPNCNSLDTQVKDSRPTE) are disordered. A zinc finger spans residues 3–34 (CPNCNSLDTQVKDSRPTEDSSVIRRRRVCIAC). The 91-residue stretch at 49 to 139 (LIVIKRNGRR…VYRNFREAKD (91 aa)) folds into the ATP-cone domain.

Belongs to the NrdR family. The cofactor is Zn(2+).

In terms of biological role, negatively regulates transcription of bacterial ribonucleotide reductase nrd genes and operons by binding to NrdR-boxes. The sequence is that of Transcriptional repressor NrdR from Rhodopseudomonas palustris (strain ATCC BAA-98 / CGA009).